Here is a 1189-residue protein sequence, read N- to C-terminus: Nucleolar protein NET1 (1189 aa).

Serine 60 and serine 166 each carry phosphoserine. 2 disordered regions span residues 160 to 260 and 345 to 1189; these read SKLN…ISSG and TAQD…FKKK. Residues 166–180 are compositionally biased toward low complexity; it reads SPQSVQPQQQIPSSS. A compositionally biased stretch (polar residues) spans 200 to 210; the sequence is IRSATNGSMRV. A phosphoserine mark is found at serine 231 and serine 252. Over residues 244–253 the composition is skewed to pro residues; that stretch reads LPPPTQPQSP. Residues 368–381 show a composition bias toward basic and acidic residues; that stretch reads PEPRISEIEKELKE. A compositionally biased stretch (low complexity) spans 391–407; that stretch reads PAKAAKIPMKKPYLENG. The segment covering 432–450 has biased composition (polar residues); the sequence is ASLQRSQSSIADNNGSPVK. Phosphoserine is present on residues serine 437, serine 439, serine 447, and serine 452. Residues 470–486 show a composition bias toward polar residues; the sequence is ASNTSITKSSNGESWGK. Position 497 is a phosphoserine (serine 497). A compositionally biased stretch (basic and acidic residues) spans 526 to 543; it reads NQVREKEDTNDKLLEKEI. Over residues 590-601 the composition is skewed to acidic residues; it reads IEDDGNDNDEVD. A compositionally biased stretch (polar residues) spans 641–657; it reads SRTSGNSKNSKPYTTVL. Residues 659–668 are compositionally biased toward basic and acidic residues; it reads KDIDNSKPDP. The residue at position 676 (threonine 676) is a Phosphothreonine. The segment covering 682-691 has biased composition (low complexity); the sequence is KRAAQLLAGA. The segment covering 692-702 has biased composition (basic and acidic residues); that stretch reads KKNEVPQKSTE. The segment covering 710 to 725 has biased composition (acidic residues); sequence TDDESESGIETDFSSD. Residues 756–777 show a composition bias toward basic and acidic residues; sequence KDSKIINKEVDEERNDKRDSQK. Over residues 778 to 792 the composition is skewed to polar residues; the sequence is KSAVSESSVTNSKIS. Basic and acidic residues predominate over residues 806–815; it reads KQNEATKVET. The span at 822-833 shows a compositional bias: low complexity; that stretch reads SSFPVVGGSPSV. Serine 830 is subject to Phosphoserine. Composition is skewed to basic and acidic residues over residues 884–897, 905–919, and 945–954; these read DLNKKAEGSKEPEK, ANDKNNSKEKEDSKS, and ANDKLKDLKA. Residues 969 to 999 show a composition bias toward low complexity; it reads SNEKNNSSANDDDSSSSGSSTEDESSSSSSS. A compositionally biased stretch (polar residues) spans 1023 to 1039; that stretch reads RSSSKIEAPSPSVNKKI. At threonine 1042 the chain carries Phosphothreonine. Residues 1055-1070 are compositionally biased toward low complexity; sequence SSPPSVKSKTTSNPSS. A phosphoserine mark is found at serine 1056 and serine 1059. Residues 1095 to 1109 are compositionally biased toward basic and acidic residues; it reads PDVKEKTSKSNEKSQ. 2 stretches are compositionally biased toward low complexity: residues 1123 to 1137 and 1158 to 1169; these read DSDSNSSSDSVSDSS and SFISAKSASAAL.

To yeast YKR010c. Component of the RENT complex which is composed of at least NET1, CDC14 and SIR2. Interacts with NSI1. In terms of processing, phosphorylated by CDC5.

The protein resides in the nucleus. Its subcellular location is the nucleolus. Functionally, has a role in chromosome maintenance and is involved in mitotic exit. Inhibits the action of CDC14 by sequestering it in the nucleolus. Also binds to RNA polymerase I and stimulates rRNA synthesis. Influences RDNA chromatin by tethering SIR2 to rDNA in the nucleolus. The protein is Nucleolar protein NET1 (NET1) of Saccharomyces cerevisiae (strain ATCC 204508 / S288c) (Baker's yeast).